Here is a 196-residue protein sequence, read N- to C-terminus: ATP-dependent Clp protease proteolytic subunit (196 aa).

Ser-101 serves as the catalytic Nucleophile. His-126 is a catalytic residue.

The protein belongs to the peptidase S14 family. Component of the chloroplastic Clp protease core complex.

It localises to the plastid. The protein localises to the chloroplast stroma. It carries out the reaction Hydrolysis of proteins to small peptides in the presence of ATP and magnesium. alpha-casein is the usual test substrate. In the absence of ATP, only oligopeptides shorter than five residues are hydrolyzed (such as succinyl-Leu-Tyr-|-NHMec, and Leu-Tyr-Leu-|-Tyr-Trp, in which cleavage of the -Tyr-|-Leu- and -Tyr-|-Trp bonds also occurs).. In terms of biological role, cleaves peptides in various proteins in a process that requires ATP hydrolysis. Has a chymotrypsin-like activity. Plays a major role in the degradation of misfolded proteins. In Morus indica (Mulberry), this protein is ATP-dependent Clp protease proteolytic subunit.